The following is a 177-amino-acid chain: Dual-action ribosomal maturation protein DarP (177 aa).

Positions 1 to 26 are disordered; that stretch reads MKIVGDSEHFKQPYDSDEEYVSKTED.

The protein belongs to the DarP family.

The protein resides in the cytoplasm. Member of a network of 50S ribosomal subunit biogenesis factors which assembles along the 30S-50S interface, preventing incorrect 23S rRNA structures from forming. Promotes peptidyl transferase center (PTC) maturation. This Shewanella sp. (strain MR-4) protein is Dual-action ribosomal maturation protein DarP.